Here is a 168-residue protein sequence, read N- to C-terminus: Crossover junction endodeoxyribonuclease RuvC (168 aa).

Residues aspartate 7, glutamate 67, and histidine 139 contribute to the active site. The Mg(2+) site is built by aspartate 7, glutamate 67, and histidine 139.

This sequence belongs to the RuvC family. As to quaternary structure, homodimer which binds Holliday junction (HJ) DNA. The HJ becomes 2-fold symmetrical on binding to RuvC with unstacked arms; it has a different conformation from HJ DNA in complex with RuvA. In the full resolvosome a probable DNA-RuvA(4)-RuvB(12)-RuvC(2) complex forms which resolves the HJ. The cofactor is Mg(2+).

The protein localises to the cytoplasm. The catalysed reaction is Endonucleolytic cleavage at a junction such as a reciprocal single-stranded crossover between two homologous DNA duplexes (Holliday junction).. Its function is as follows. The RuvA-RuvB-RuvC complex processes Holliday junction (HJ) DNA during genetic recombination and DNA repair. Endonuclease that resolves HJ intermediates. Cleaves cruciform DNA by making single-stranded nicks across the HJ at symmetrical positions within the homologous arms, yielding a 5'-phosphate and a 3'-hydroxyl group; requires a central core of homology in the junction. The consensus cleavage sequence is 5'-(A/T)TT(C/G)-3'. Cleavage occurs on the 3'-side of the TT dinucleotide at the point of strand exchange. HJ branch migration catalyzed by RuvA-RuvB allows RuvC to scan DNA until it finds its consensus sequence, where it cleaves and resolves the cruciform DNA. The polypeptide is Crossover junction endodeoxyribonuclease RuvC (Deinococcus geothermalis (strain DSM 11300 / CIP 105573 / AG-3a)).